Reading from the N-terminus, the 506-residue chain is Conglutin alpha 1 (506 aa).

The signal sequence occupies residues 1–19 (MANKLLALSLFLLFSGCFA). 2 cysteine pairs are disulfide-bonded: C31/C64 and C107/C328. The 200-residue stretch at 36–235 (LNALEPDNSV…AFSVDREIVR (200 aa)) folds into the Cupin type-1 1 domain. Disordered regions lie at residues 111–131 (YEEP…RHQK), 195–216 (QQKE…NVLS), and 251–322 (VKEG…DRNG). A compositionally biased stretch (low complexity) spans 195 to 207 (QQKEGGQGQQQEG). Positions 270–280 (EEEEEEEEEEE) are enriched in acidic residues. A compositionally biased stretch (basic residues) spans 306–315 (QVRRVRRPHH). Residues 334–483 (HNIGQSTSPD…AFNLDRDQAR (150 aa)) enclose the Cupin type-1 2 domain. N-linked (GlcNAc...) asparagine glycans are attached at residues N397 and N439.

This sequence belongs to the 11S seed storage protein (globulins) family. Hexamer; each subunit is composed of an acidic and a basic chain derived from a single precursor and linked by a disulfide bond. Component of globulins complexes which accumulate in seeds. As to expression, expressed in developing cotyledons and in the embryonic axis of germinating seeds.

Functionally, sulfur-rich seed storage protein. This protein found in the seeds of many leguminous and non-leguminous plants is the source of sulfur-containing amino acids in seed meals. The protein is Conglutin alpha 1 of Lupinus angustifolius (Narrow-leaved blue lupine).